The chain runs to 319 residues: Acyl-coenzyme A thioesterase 8 (319 aa).

The segment at 1–20 (MSSPQAPEDGQGCGDRGDPP) is disordered. Residues Asp232, Ser254, and Gln304 each act as charge relay system in the active site. The Microbody targeting signal motif lies at 317-319 (SKL).

Belongs to the C/M/P thioester hydrolase family. In terms of assembly, homodimer. As to quaternary structure, (Microbial infection) Interacts with human immunodeficiency virus (HIV-1) Nef (via middle region); this interaction enhances ACOT8 Acyl-CoA thioesterase activity and occurs in a Nef myristoylation-independent manner. According to a second report, the interaction with HIV-1 Nef occurs in a Nef myristoylation-independent manner but does not enhance ACOT8 Acyl-CoA thioesterase activity. Detected in a T-cell line (at protein level). Ubiquitous.

The protein resides in the peroxisome matrix. It catalyses the reaction choloyl-CoA + H2O = cholate + CoA + H(+). It carries out the reaction chenodeoxycholoyl-CoA + H2O = chenodeoxycholate + CoA + H(+). The enzyme catalyses acetyl-CoA + H2O = acetate + CoA + H(+). The catalysed reaction is butanoyl-CoA + H2O = butanoate + CoA + H(+). It catalyses the reaction 2-methylpropanoyl-CoA + H2O = 2-methylpropanoate + CoA + H(+). It carries out the reaction hexanoyl-CoA + H2O = hexanoate + CoA + H(+). The enzyme catalyses octanoyl-CoA + H2O = octanoate + CoA + H(+). The catalysed reaction is decanoyl-CoA + H2O = decanoate + CoA + H(+). It catalyses the reaction dodecanoyl-CoA + H2O = dodecanoate + CoA + H(+). It carries out the reaction tetradecanoyl-CoA + H2O = tetradecanoate + CoA + H(+). The enzyme catalyses hexadecanoyl-CoA + H2O = hexadecanoate + CoA + H(+). The catalysed reaction is octadecanoyl-CoA + H2O = octadecanoate + CoA + H(+). It catalyses the reaction malonyl-CoA + H2O = malonate + CoA + H(+). It carries out the reaction acetoacetyl-CoA + H2O = acetoacetate + CoA + H(+). The enzyme catalyses propanoyl-CoA + H2O = propanoate + CoA + H(+). The catalysed reaction is succinyl-CoA + H2O = succinate + CoA + H(+). It catalyses the reaction glutaryl-CoA + H2O = glutarate + CoA + H(+). It carries out the reaction hexanedioyl-CoA + H2O = hexanedioate + CoA + H(+). The enzyme catalyses octanedioyl-CoA + H2O = octanedioate + CoA + H(+). The catalysed reaction is decanedioyl-CoA + H2O = decanedioate + CoA + H(+). It catalyses the reaction dodecanedioyl-CoA + H2O = dodecanedioate + CoA + H(+). It carries out the reaction (9Z)-tetradecenoyl-CoA + H2O = (9Z)-tetradecenoate + CoA + H(+). The enzyme catalyses (9Z)-hexadecenoyl-CoA + H2O = (9Z)-hexadecenoate + CoA + H(+). The catalysed reaction is (9Z)-octadecenoyl-CoA + H2O = (9Z)-octadecenoate + CoA + H(+). It catalyses the reaction (9Z,12Z)-octadecadienoyl-CoA + H2O = (9Z,12Z)-octadecadienoate + CoA + H(+). It carries out the reaction eicosanoyl-CoA + H2O = eicosanoate + CoA + H(+). The enzyme catalyses (5Z,8Z,11Z,14Z)-eicosatetraenoyl-CoA + H2O = (5Z,8Z,11Z,14Z)-eicosatetraenoate + CoA + H(+). The catalysed reaction is 4,8-dimethylnonanoyl-CoA + H2O = 4,8-dimethylnonanoate + CoA + H(+). It catalyses the reaction 2,6-dimethylheptanoyl-CoA + H2O = 2,6-dimethylheptanoate + CoA + H(+). It carries out the reaction (3S)-3-hydroxy-3-methylglutaryl-CoA + H2O = 3-hydroxy-3-methylglutarate + CoA + H(+). The enzyme catalyses 3alpha,7alpha,12alpha-trihydroxy-5beta-cholestan-26-oyl-CoA + H2O = 3alpha,7alpha,12alpha-trihydroxy-5beta-cholestan-26-oate + CoA + H(+). The catalysed reaction is 2-methyloctadecanoyl-CoA + H2O = 2-methyloctadecanoate + CoA + H(+). It catalyses the reaction prostaglandin F2alpha-CoA + H2O = prostaglandin F2alpha + CoA + H(+). Its pathway is lipid metabolism; fatty acid metabolism. With respect to regulation, inhibited by CoASH (IC(50)=10-15 uM). Also inhibited by cysteine-reactive agents. Its function is as follows. Catalyzes the hydrolysis of acyl-CoAs into free fatty acids and coenzyme A (CoASH), regulating their respective intracellular levels. Displays no strong substrate specificity with respect to the carboxylic acid moiety of Acyl-CoAs. Hydrolyzes medium length (C2 to C20) straight-chain, saturated and unsaturated acyl-CoAS but is inactive towards substrates with longer aliphatic chains. Moreover, it catalyzes the hydrolysis of CoA esters of bile acids, such as choloyl-CoA and chenodeoxycholoyl-CoA and competes with bile acid CoA:amino acid N-acyltransferase (BAAT). Is also able to hydrolyze CoA esters of dicarboxylic acids. It is involved in the metabolic regulation of peroxisome proliferation. (Microbial infection) May mediate Nef-induced down-regulation of CD4 cell-surface expression. This chain is Acyl-coenzyme A thioesterase 8 (ACOT8), found in Homo sapiens (Human).